We begin with the raw amino-acid sequence, 217 residues long: Outer-membrane lipoprotein LolB (217 aa).

The first 20 residues, 1 to 20 (MSKALRTLALSGLVLVGLSA), serve as a signal peptide directing secretion. A lipid anchor (N-palmitoyl cysteine) is attached at C21. C21 is lipidated: S-diacylglycerol cysteine.

Belongs to the LolB family. As to quaternary structure, monomer.

Its subcellular location is the cell outer membrane. In terms of biological role, plays a critical role in the incorporation of lipoproteins in the outer membrane after they are released by the LolA protein. The polypeptide is Outer-membrane lipoprotein LolB (Xanthomonas oryzae pv. oryzae (strain MAFF 311018)).